Here is a 233-residue protein sequence, read N- to C-terminus: Large ribosomal subunit protein uL1 (233 aa).

The protein belongs to the universal ribosomal protein uL1 family. In terms of assembly, part of the 50S ribosomal subunit.

Functionally, binds directly to 23S rRNA. The L1 stalk is quite mobile in the ribosome, and is involved in E site tRNA release. Its function is as follows. Protein L1 is also a translational repressor protein, it controls the translation of the L11 operon by binding to its mRNA. The sequence is that of Large ribosomal subunit protein uL1 from Shewanella amazonensis (strain ATCC BAA-1098 / SB2B).